A 162-amino-acid polypeptide reads, in one-letter code: Transcriptional repressor NrdR (162 aa).

The interval 1 to 21 is disordered; that stretch reads MNCPDCGDEQTRVIDTETSAD. The segment at 3-34 is a zinc-finger region; it reads CPDCGDEQTRVIDTETSADGTSVRRRRECQRC. Residues 49–139 form the ATP-cone domain; it reads LQVKKRNGTI…VYKAFSEPQE (91 aa).

The protein belongs to the NrdR family. It depends on Zn(2+) as a cofactor.

In terms of biological role, negatively regulates transcription of bacterial ribonucleotide reductase nrd genes and operons by binding to NrdR-boxes. This is Transcriptional repressor NrdR from Halorubrum lacusprofundi (strain ATCC 49239 / DSM 5036 / JCM 8891 / ACAM 34).